Consider the following 206-residue polypeptide: Small ribosomal subunit protein uS4 (206 aa).

An S4 RNA-binding domain is found at 96-159 (SRLDNVVYRM…KKQARIVEGL (64 aa)).

The protein belongs to the universal ribosomal protein uS4 family. In terms of assembly, part of the 30S ribosomal subunit. Contacts protein S5. The interaction surface between S4 and S5 is involved in control of translational fidelity.

One of the primary rRNA binding proteins, it binds directly to 16S rRNA where it nucleates assembly of the body of the 30S subunit. Its function is as follows. With S5 and S12 plays an important role in translational accuracy. This Chromobacterium violaceum (strain ATCC 12472 / DSM 30191 / JCM 1249 / CCUG 213 / NBRC 12614 / NCIMB 9131 / NCTC 9757 / MK) protein is Small ribosomal subunit protein uS4.